A 297-amino-acid polypeptide reads, in one-letter code: Protoheme IX farnesyltransferase (297 aa).

The next 9 helical transmembrane spans lie at 26–46 (VTQLAVFCAVIGMFLATPGMV), 48–68 (YPVLFGGIAGIWLLAGAAFAV), 96–116 (FHIIIFSIILGSLGMIILWNF), 120–140 (LTMWLTLATFVGYAVIYTWLL), 147–167 (NIVIGGLSGAMPPALGWAAVT), 174–194 (AWLLVLIIFVWTPPHFWALAL), 218–238 (LLNILLYTLILIAATLLPYIY), 243–263 (IIYLISAIVLGLMFLAYVIAL), and 276–296 (FRFSITYLSLLFAALLIDHYF).

The protein belongs to the UbiA prenyltransferase family. Protoheme IX farnesyltransferase subfamily.

Its subcellular location is the cell membrane. The enzyme catalyses heme b + (2E,6E)-farnesyl diphosphate + H2O = Fe(II)-heme o + diphosphate. Its pathway is porphyrin-containing compound metabolism; heme O biosynthesis; heme O from protoheme: step 1/1. Functionally, converts heme B (protoheme IX) to heme O by substitution of the vinyl group on carbon 2 of heme B porphyrin ring with a hydroxyethyl farnesyl side group. The sequence is that of Protoheme IX farnesyltransferase from Polynucleobacter asymbioticus (strain DSM 18221 / CIP 109841 / QLW-P1DMWA-1) (Polynucleobacter necessarius subsp. asymbioticus).